Here is a 532-residue protein sequence, read N- to C-terminus: L-proline--[L-prolyl-carrier protein] ligase (532 aa).

A disordered region spans residues lysine 510–arginine 532.

This sequence belongs to the ATP-dependent AMP-binding enzyme family.

The enzyme catalyses holo-[peptidyl-carrier protein] + L-proline + ATP = L-prolyl-[peptidyl-carrier protein] + AMP + diphosphate. In terms of biological role, involved in the biosynthesis of undecylprodigiosin. Catalyzes the conversion of L-proline to L-prolyl-AMP and the transfer of the L-prolyl group to acyl carrier protein RedO. This is L-proline--[L-prolyl-carrier protein] ligase from Streptomyces coelicolor (strain ATCC BAA-471 / A3(2) / M145).